The chain runs to 123 residues: Small ribosomal subunit protein uS11 (123 aa).

It belongs to the universal ribosomal protein uS11 family. Part of the 30S ribosomal subunit. Interacts with proteins S7 and S18. Binds to IF-3.

Its function is as follows. Located on the platform of the 30S subunit, it bridges several disparate RNA helices of the 16S rRNA. Forms part of the Shine-Dalgarno cleft in the 70S ribosome. The chain is Small ribosomal subunit protein uS11 from Coxiella burnetii (strain CbuG_Q212) (Coxiella burnetii (strain Q212)).